The primary structure comprises 221 residues: Toxin coregulated pilus biosynthesis protein P (221 aa).

The ompR/PhoB-type DNA-binding region spans 5 to 109; that stretch reads RVIYQFPDNL…VKLQGYRINI (105 aa). The chain crosses the membrane as a helical span at residues 143–163; the sequence is VVPYLVFSALYVALLPVIWWS.

It is found in the cell membrane. Its function is as follows. Involved in TCP pilus biogenesis. In Vibrio cholerae serotype O1 (strain ATCC 39315 / El Tor Inaba N16961), this protein is Toxin coregulated pilus biosynthesis protein P (tcpP).